Consider the following 268-residue polypeptide: 3-deoxy-manno-octulosonate cytidylyltransferase (268 aa).

It belongs to the KdsB family.

Its subcellular location is the cytoplasm. The catalysed reaction is 3-deoxy-alpha-D-manno-oct-2-ulosonate + CTP = CMP-3-deoxy-beta-D-manno-octulosonate + diphosphate. The protein operates within nucleotide-sugar biosynthesis; CMP-3-deoxy-D-manno-octulosonate biosynthesis; CMP-3-deoxy-D-manno-octulosonate from 3-deoxy-D-manno-octulosonate and CTP: step 1/1. Its pathway is bacterial outer membrane biogenesis; lipopolysaccharide biosynthesis. Functionally, activates KDO (a required 8-carbon sugar) for incorporation into bacterial lipopolysaccharide in Gram-negative bacteria. The polypeptide is 3-deoxy-manno-octulosonate cytidylyltransferase (Psychrobacter arcticus (strain DSM 17307 / VKM B-2377 / 273-4)).